Reading from the N-terminus, the 632-residue chain is POU domain, class 2, transcription factor 1 (632 aa).

Residues Thr157 and Thr163 each carry the phosphothreonine modification. The POU-specific domain occupies 167 to 241; that stretch reads EEPSDLEELE…LLEKWLNDAE (75 aa). Residue Ser170 is modified to Phosphoserine. Residues 243–258 are compositionally biased toward low complexity; that stretch reads LSSDSTASSPSALNSP. Residues 243–273 form a disordered region; sequence LSSDSTASSPSALNSPGLGAEGLNRRRKKRT. The homeobox DNA-binding region spans 268-327; it reads RRKKRTSIETNIRVALEKSFMENQKPTSEDITLIAEQLNMEKEVIRVWFCNRRQKEKRIN. Ser274 and Ser337 each carry phosphoserine. Residues 385 to 448 are disordered; sequence GTTDSTSNNT…STPLPSPLGA (64 aa). Over residues 394-441 the composition is skewed to low complexity; sequence TATVISTAPPASSAVTSPSLSPSPSASASTSEASSASETSTTQTTSTP.

The protein belongs to the POU transcription factor family. Class-2 subfamily. Interacts with POU2AF1; the interaction increases POU2F1 transactivation activity. Interacts with NR3C1, AR, PGR and HCFC1. Post-translationally, phosphorylated by PRKDC. As to expression, widely expressed.

The protein localises to the nucleus. Transcription factor that binds to the octamer motif (5'-ATTTGCAT-3') and activates the promoters of the genes for some small nuclear RNAs (snRNA) and of genes such as those for histone H2B and immunoglobulins. Modulates transcription transactivation by NR3C1, AR and PGR. This chain is POU domain, class 2, transcription factor 1 (Pou2f1), found in Rattus norvegicus (Rat).